We begin with the raw amino-acid sequence, 346 residues long: Ribulose-5-phosphate reductase (346 aa).

Zn(2+)-binding residues include C45, H71, E72, and E151.

This sequence belongs to the zinc-containing alcohol dehydrogenase family. The cofactor is Zn(2+).

The enzyme catalyses D-ribitol 5-phosphate + NADP(+) = D-ribulose 5-phosphate + NADPH + H(+). It functions in the pathway cell wall biogenesis; poly(ribitol phosphate) teichoic acid biosynthesis. In terms of biological role, catalyzes the NADPH dependent reduction of D-ribulose 5-phosphate to D-ribitol 5-phosphate. The polypeptide is Ribulose-5-phosphate reductase (Streptococcus pneumoniae (strain ATCC BAA-255 / R6)).